The following is a 228-amino-acid chain: Small ribosomal subunit protein uS2c (228 aa).

Belongs to the universal ribosomal protein uS2 family.

It localises to the plastid. The protein resides in the chloroplast. This chain is Small ribosomal subunit protein uS2c (rps2), found in Mesostigma viride (Green alga).